The chain runs to 1045 residues: Mitotic deacetylase-associated SANT domain protein (1045 aa).

Met-1 is subject to N-acetylmethionine. Disordered stretches follow at residues 1–68 (MNLQ…PPPS) and 99–159 (NSVM…PTYY). Residues 132–146 (STWNCHSLSLYSATK) are compositionally biased toward polar residues. Lys-166 participates in a covalent cross-link: Glycyl lysine isopeptide (Lys-Gly) (interchain with G-Cter in SUMO2). Arg-193 is modified (asymmetric dimethylarginine). 5 disordered regions span residues 228-264 (QVFRQGPPPPNPVAAFPPQKQQQQQQPQQQQQQQQAA), 276-305 (SMPQQPSQQPQDFGLQPAGPLGQSHLAHHS), 330-349 (APQPALPQVQIPFPRRSRRL), 378-397 (HHWPLQQPPPGSLGQPHPEA), and 410-441 (LPDGERLAPNGREREAPAMGSEEGMRAVSTGD). Residues 240–264 (VAAFPPQKQQQQQQPQQQQQQQQAA) show a composition bias toward low complexity. Basic and acidic residues predominate over residues 412–425 (DGERLAPNGREREA). Residue Arg-447 is modified to Omega-N-methylarginine. Phosphoserine is present on Ser-461. The tract at residues 543-563 (QAGGLDEDGKGPEQNPAEHKP) is disordered. Positions 549–563 (EDGKGPEQNPAEHKP) are enriched in basic and acidic residues. Residue Lys-590 forms a Glycyl lysine isopeptide (Lys-Gly) (interchain with G-Cter in SUMO1); alternate linkage. Lys-590 participates in a covalent cross-link: Glycyl lysine isopeptide (Lys-Gly) (interchain with G-Cter in SUMO2); alternate. A Phosphothreonine modification is found at Thr-655. Ser-661 bears the Phosphoserine mark. At Thr-704 the chain carries Phosphothreonine. Ser-709 is modified (phosphoserine). Residue Thr-715 is modified to Phosphothreonine. The region spanning 721 to 813 (PRINVGSRFQ…ETLNKLLLKK (93 aa)) is the ELM2 domain. Residues 828 to 879 (TGSDQWKMAERKLFNKGIAIYKKDFFLVQKLIQTKTVAQCVEFYYTYKKQVK) enclose the SANT domain. The tract at residues 887 to 1045 (TFGDVDTSDE…NTFPCKKCGR (159 aa)) is disordered. Composition is skewed to basic and acidic residues over residues 894 to 909 (SDEKSAQEEVEVDIKT) and 919 to 942 (PRRESPSEERLEPKREVKEPRKEG). Ser-923 is modified (phosphoserine). Residues 943 to 957 (EEEVPEIQEKEEQEE) are compositionally biased toward acidic residues. Positions 970–980 (ATQTLQANESA) are enriched in polar residues.

As to quaternary structure, interacts with DNTTIP1. Identified in a histone deacetylase complex that contains DNTTIP1, HDAC1 and MIDEAS; this complex assembles into a tetramer that contains four copies of each protein chain.

It is found in the nucleus. This chain is Mitotic deacetylase-associated SANT domain protein, found in Homo sapiens (Human).